The primary structure comprises 205 residues: Protein TON_1965 (205 aa).

Residues 7–201 (EWGEFLVRLA…EEYPKGPVKR (195 aa)) form the AMMECR1 domain.

This chain is Protein TON_1965, found in Thermococcus onnurineus (strain NA1).